We begin with the raw amino-acid sequence, 90 residues long: MIKNSFSAIFFKEENEDNKGSVEFQVVSFTNRIRKLTSHLELHKKDYLSQRGLRKILGKRQRLLAYLSKKNRVRYKELIGQLEIRETKKN.

The protein belongs to the universal ribosomal protein uS15 family. In terms of assembly, part of the 30S ribosomal subunit.

It is found in the plastid. Its subcellular location is the chloroplast. The chain is Small ribosomal subunit protein uS15c (rps15) from Daucus carota (Wild carrot).